The sequence spans 327 residues: Dipeptide transport ATP-binding protein DppF (327 aa).

One can recognise an ABC transporter domain in the interval 12–261; sequence LNAIGLKKYY…PQHPYTKALL (250 aa). Position 54–61 (54–61) interacts with ATP; that stretch reads GESGCGKS.

It belongs to the ABC transporter superfamily.

It localises to the cell inner membrane. It catalyses the reaction a dipeptide(out) + ATP + H2O = a dipeptide(in) + ADP + phosphate + H(+). Its function is as follows. Part of the ABC transporter DppBCDF involved in dipeptide transport. Responsible for energy coupling to the transport system. In Haemophilus influenzae (strain ATCC 51907 / DSM 11121 / KW20 / Rd), this protein is Dipeptide transport ATP-binding protein DppF (dppF).